A 303-amino-acid polypeptide reads, in one-letter code: N-acetyl-D-glucosamine kinase (303 aa).

ATP is bound by residues 4–11 and 133–140; these read GFDIGGTK and GVGGGLIF. His157, Cys177, Cys179, and Cys184 together coordinate Zn(2+).

Belongs to the ROK (NagC/XylR) family. NagK subfamily.

It catalyses the reaction N-acetyl-D-glucosamine + ATP = N-acetyl-D-glucosamine 6-phosphate + ADP + H(+). It participates in cell wall biogenesis; peptidoglycan recycling. In terms of biological role, catalyzes the phosphorylation of N-acetyl-D-glucosamine (GlcNAc) derived from cell-wall degradation, yielding GlcNAc-6-P. This Escherichia coli O81 (strain ED1a) protein is N-acetyl-D-glucosamine kinase.